The chain runs to 360 residues: Polyamine aminopropyltransferase 2 (360 aa).

Positions 68–299 (DIWDEISLKE…TDWGFHIAAN (232 aa)) constitute a PABS domain. Glutamine 94 serves as a coordination point for S-methyl-5'-thioadenosine. Residues histidine 123 and aspartate 147 each contribute to the spermidine site. S-methyl-5'-thioadenosine-binding positions include aspartate 167 and 201-202 (DA). The active-site Proton acceptor is aspartate 219.

It belongs to the spermidine/spermine synthase family. In terms of assembly, homodimer or homotetramer.

The protein localises to the cytoplasm. The catalysed reaction is S-adenosyl 3-(methylsulfanyl)propylamine + putrescine = S-methyl-5'-thioadenosine + spermidine + H(+). The protein operates within amine and polyamine biosynthesis; spermidine biosynthesis; spermidine from putrescine: step 1/1. Catalyzes the irreversible transfer of a propylamine group from the amino donor S-adenosylmethioninamine (decarboxy-AdoMet) to putrescine (1,4-diaminobutane) to yield spermidine. In Bacillus anthracis, this protein is Polyamine aminopropyltransferase 2.